Reading from the N-terminus, the 664-residue chain is Transketolase 1 (664 aa).

Residue histidine 26 participates in substrate binding. Thiamine diphosphate contacts are provided by residues histidine 66 and 114-116; that span reads GPL. Residue aspartate 155 participates in Mg(2+) binding. Glycine 156 and asparagine 185 together coordinate thiamine diphosphate. Mg(2+)-binding residues include asparagine 185 and isoleucine 187. Residues histidine 260, arginine 357, and serine 384 each contribute to the substrate site. Histidine 260 is a binding site for thiamine diphosphate. The active-site Proton donor is glutamate 411. Phenylalanine 437 lines the thiamine diphosphate pocket. Histidine 461, aspartate 469, and arginine 520 together coordinate substrate.

Belongs to the transketolase family. In terms of assembly, homodimer. Requires Mg(2+) as cofactor. Ca(2+) serves as cofactor. Mn(2+) is required as a cofactor. The cofactor is Co(2+). It depends on thiamine diphosphate as a cofactor.

The catalysed reaction is D-sedoheptulose 7-phosphate + D-glyceraldehyde 3-phosphate = aldehydo-D-ribose 5-phosphate + D-xylulose 5-phosphate. In terms of biological role, catalyzes the transfer of a two-carbon ketol group from a ketose donor to an aldose acceptor, via a covalent intermediate with the cofactor thiamine pyrophosphate. This chain is Transketolase 1 (tkt1), found in Aliivibrio fischeri (strain ATCC 700601 / ES114) (Vibrio fischeri).